The primary structure comprises 322 residues: Phosphatidylserine decarboxylase proenzyme (322 aa).

Catalysis depends on charge relay system; for autoendoproteolytic cleavage activity residues Asp90, His147, and Ser254. Residue Ser254 is the Schiff-base intermediate with substrate; via pyruvic acid; for decarboxylase activity of the active site. Ser254 carries the pyruvic acid (Ser); by autocatalysis modification. The tract at residues 294-322 (EVEPVPLPEEEIKAEHDASPLVDDKKDET) is disordered. Basic and acidic residues predominate over residues 303-322 (EEIKAEHDASPLVDDKKDET).

The protein belongs to the phosphatidylserine decarboxylase family. PSD-B subfamily. Prokaryotic type I sub-subfamily. As to quaternary structure, heterodimer of a large membrane-associated beta subunit and a small pyruvoyl-containing alpha subunit. It depends on pyruvate as a cofactor. Is synthesized initially as an inactive proenzyme. Formation of the active enzyme involves a self-maturation process in which the active site pyruvoyl group is generated from an internal serine residue via an autocatalytic post-translational modification. Two non-identical subunits are generated from the proenzyme in this reaction, and the pyruvate is formed at the N-terminus of the alpha chain, which is derived from the carboxyl end of the proenzyme. The autoendoproteolytic cleavage occurs by a canonical serine protease mechanism, in which the side chain hydroxyl group of the serine supplies its oxygen atom to form the C-terminus of the beta chain, while the remainder of the serine residue undergoes an oxidative deamination to produce ammonia and the pyruvoyl prosthetic group on the alpha chain. During this reaction, the Ser that is part of the protease active site of the proenzyme becomes the pyruvoyl prosthetic group, which constitutes an essential element of the active site of the mature decarboxylase.

It is found in the cell membrane. It carries out the reaction a 1,2-diacyl-sn-glycero-3-phospho-L-serine + H(+) = a 1,2-diacyl-sn-glycero-3-phosphoethanolamine + CO2. Its pathway is phospholipid metabolism; phosphatidylethanolamine biosynthesis; phosphatidylethanolamine from CDP-diacylglycerol: step 2/2. Functionally, catalyzes the formation of phosphatidylethanolamine (PtdEtn) from phosphatidylserine (PtdSer). In Salmonella arizonae (strain ATCC BAA-731 / CDC346-86 / RSK2980), this protein is Phosphatidylserine decarboxylase proenzyme.